Consider the following 77-residue polypeptide: MAPCRTMMVLLCFVLFLAASSSCVAAARIGATMEMKKNIKRLTFKNSHIFGYLPKGVPIPPSAPSKRHNSFVNSLPH.

The signal sequence occupies residues 1–26; it reads MAPCRTMMVLLCFVLFLAASSSCVAA. The segment at 56–69 is RLK5-binding; the sequence is GVPIPPSAPSKRHN.

As to quaternary structure, interaction with RLK5. In terms of tissue distribution, expressed specifically in the floral abscission zone.

It is found in the secreted. The protein localises to the extracellular space. Its function is as follows. Involved in an ethylene-independent separation step of floral abscission. Promotes abscission zone (AZ) cells rounding. May act with RLK5 and HSL2 as ligand-receptor pairs. The polypeptide is Protein IDA (Arabidopsis thaliana (Mouse-ear cress)).